The primary structure comprises 2812 residues: Zonadhesin (2812 aa).

The N-terminal stretch at 1 to 17 (MVPPVWTLLLLVGAALF) is a signal peptide. Residues 18–2757 (RKEKPPDQKL…DAPPPRKPAS (2740 aa)) lie on the Extracellular side of the membrane. 3 MAM domains span residues 39 to 204 (TQCD…SCNR), 209 to 368 (QTCS…PCGE), and 371 to 536 (PQCD…TCPV). The interval 61 to 84 (EDWVRASGPSPTGSTGAPGGYPNG) is disordered. A compositionally biased stretch (low complexity) spans 66 to 75 (ASGPSPTGST). 2 N-linked (GlcNAc...) asparagine glycosylation sites follow: Asn333 and Asn493. 2 disordered regions span residues 545–884 (VSPV…PTEK) and 904–929 (EKPT…KPTI). Residues 547-558 (PVSSTGPSETTG) are compositionally biased toward low complexity. Residues 559–570 (LTENPTISTKKP) are compositionally biased toward polar residues. The tract at residues 573-1041 (SIEKPSVTTE…GTTTTSRSST (469 aa)) is 66 X heptapeptide repeats (approximate) (mucin-like domain). Low complexity-rich tracts occupy residues 592–603 (TIPTEKPTISTE), 651–675 (TEKP…MEEP), 713–842 (SPEK…STEK), 853–868 (STEK…TISP), and 916–929 (STEK…KPTI). A TIL 1 domain is found at 1044 to 1093 (CPPNARYESCACPASCKSPRPSCGPLCREGCVCNPGFLFSDNHCIQASSC). The VWFC 1 domain maps to 1103–1148 (EPGAEWFSPNCTEHCRCWPGSRVECQISQCGTHTVCQLKNGQYGCH). Asn1112 and Asn1188 each carry an N-linked (GlcNAc...) asparagine glycan. Residues 1154-1331 (ATCLVYGDPH…TDQDEDQECQ (178 aa)) form the VWFD 1 domain. 2 disulfide bridges follow: Cys1156/Cys1291 and Cys1178/Cys1330. Positions 1302–1316 (HLKLDGSPAGDKEEL) are enriched in basic and acidic residues. The segment at 1302-1323 (HLKLDGSPAGDKEELGNSWQTD) is disordered. The TIL 2 domain maps to 1426-1479 (CPPNSKYSLCAKPCPDTCHSGFSGMFCSDRCVEACECNPGFVLSGLECIPRSQC). Residues 1480 to 1535 (GCLHPAGSYFKVGERWYKPGCKELCVCESNNRIRCQPWRCRAQEFCGQQDGIYGCH) form the VWFC 2 domain. The VWFD 2 domain occupies 1540–1720 (ATCTASGDPH…LPESSEPGCF (181 aa)). Disulfide bonds link Cys1542–Cys1680 and Cys1564–Cys1719. N-linked (GlcNAc...) asparagine glycosylation is found at Asn1685 and Asn1804. Residues 1812–1867 (CPPGSSYSPCSSPCPDTCSSINNPRDCPKALPCAESCECQKGHILSGTSCVPLGQC) form the TIL 3 domain. Residues 1868 to 1924 (GCTDPAGSYHPVGERWYTENTCTRLCTCSVHNNITCFQSTCKPNQICWALDGLLHCR) enclose the VWFC 3 domain. Asn1900 and Asn1946 each carry an N-linked (GlcNAc...) asparagine glycan. A VWFD 3 domain is found at 1929 to 2108 (GVCQLPGESH…KDKDIDPSCQ (180 aa)). Cystine bridges form between Cys1931–Cys2069 and Cys1953–Cys2107. Residue Asn2203 is glycosylated (N-linked (GlcNAc...) asparagine). Positions 2211–2267 (CPAYSSYTNCLPSCSPSCWDLDGRCEGAKVPSACAEGCICQPGYVLSEDKCVPRSQC) constitute a TIL 4 domain. Positions 2268–2329 (GCKDAHGGSI…NSNCVSDKSE (62 aa)) constitute a VWFC 4 domain. The VWFD 4 domain maps to 2329–2505 (EQCSVYGDPR…SWEVKTEDAL (177 aa)). Cys2331 and Cys2468 are disulfide-bonded. Asn2542 and Asn2701 each carry an N-linked (GlcNAc...) asparagine glycan. Residues 2652-2797 (CGCTSNGIYY…KREKTQEGDR (146 aa)) form the VWFC 5 domain. In terms of domain architecture, EGF-like spans 2708 to 2744 (PESPCLQNPCQNDGQCREQGATFTCECEVGYGGGLCM). 3 disulfide bridges follow: Cys2712-Cys2723, Cys2717-Cys2732, and Cys2734-Cys2743. The helical transmembrane segment at 2758 to 2778 (NLVGVLLGLLVPVVVVLLAVT) threads the bilayer. At 2779-2812 (RECIYRTRRKREKTQEGDRLARLVDTDTVLDCAC) the chain is on the cytoplasmic side.

In terms of assembly, probably forms covalent oligomers. As to expression, in testis, primarily in haploid spermatids.

The protein localises to the cell membrane. Its function is as follows. Binds in a species-specific manner to the zona pellucida of the egg. May be involved in gamete recognition and/or signaling. This Homo sapiens (Human) protein is Zonadhesin (ZAN).